The sequence spans 76 residues: U1-cyrtautoxin-As1b (76 aa).

4 disulfide bridges follow: cysteine 23/cysteine 37, cysteine 30/cysteine 51, cysteine 36/cysteine 66, and cysteine 69/cysteine 76.

This sequence belongs to the neurotoxin 21 family. As to expression, expressed by the venom gland.

Its subcellular location is the secreted. In terms of biological role, neurotoxin with probable ion channel impairing activity. Is both paralytic and lethal, when injected into lepidopteran larvae. The sequence is that of U1-cyrtautoxin-As1b from Apomastus schlingeri (Trap-door spider).